The primary structure comprises 96 residues: Teretoxin Tan6.14 (96 aa).

An N-terminal signal peptide occupies residues 1-21 (MRPLLVFVLMVSVSLAFSLEG). The propeptide occupies 22–60 (MPNNGGDSVASITANQARRFKRNPLFSFAQHSLVDLKAR).

Contains 3 disulfide bonds. In terms of tissue distribution, expressed by the venom duct.

It is found in the secreted. The protein is Teretoxin Tan6.14 of Terebra anilis (Auger snail).